The sequence spans 179 residues: MNRLKEKYTKEVVPALMSKFNYKSIMQVPKIEKIVINMGVGDAVQNPKALDSAVEELTLIAGQRPVVTRAKKSIAGFRLRQGMPIGAKVTLRGERMYEFLDKLISVSLPRVRDFRGVSKKAFDGRGNYTLGIKEQLIFPEIDYDKVNKVRGMDIVIVTTANTDEEARELLTLLGMPFQK.

This sequence belongs to the universal ribosomal protein uL5 family. As to quaternary structure, part of the 50S ribosomal subunit; part of the 5S rRNA/L5/L18/L25 subcomplex. Contacts the 5S rRNA and the P site tRNA. Forms a bridge to the 30S subunit in the 70S ribosome.

In terms of biological role, this is one of the proteins that bind and probably mediate the attachment of the 5S RNA into the large ribosomal subunit, where it forms part of the central protuberance. In the 70S ribosome it contacts protein S13 of the 30S subunit (bridge B1b), connecting the 2 subunits; this bridge is implicated in subunit movement. Contacts the P site tRNA; the 5S rRNA and some of its associated proteins might help stabilize positioning of ribosome-bound tRNAs. This Geobacillus thermodenitrificans (strain NG80-2) protein is Large ribosomal subunit protein uL5.